A 169-amino-acid chain; its full sequence is Cysteine synthase B (169 aa).

N6-(pyridoxal phosphate)lysine is present on Lys45. Asn75 is a pyridoxal 5'-phosphate binding site. Residues 146–169 (ANGDNPEAHYTSTGPEIWRQTGGT) are disordered.

Belongs to the cysteine synthase/cystathionine beta-synthase family. It depends on pyridoxal 5'-phosphate as a cofactor.

It catalyses the reaction O-acetyl-L-serine + hydrogen sulfide = L-cysteine + acetate. Its pathway is amino-acid biosynthesis; L-cysteine biosynthesis; L-cysteine from L-serine: step 2/2. The chain is Cysteine synthase B (cysM) from Pseudomonas syringae pv. syringae.